The chain runs to 335 residues: 4-hydroxy-3-methylbut-2-enyl diphosphate reductase (335 aa).

C21 lines the [4Fe-4S] cluster pocket. (2E)-4-hydroxy-3-methylbut-2-enyl diphosphate contacts are provided by H50 and H86. 2 residues coordinate dimethylallyl diphosphate: H50 and H86. Isopentenyl diphosphate-binding residues include H50 and H86. C108 lines the [4Fe-4S] cluster pocket. H136 is a (2E)-4-hydroxy-3-methylbut-2-enyl diphosphate binding site. Residue H136 coordinates dimethylallyl diphosphate. H136 contributes to the isopentenyl diphosphate binding site. E138 (proton donor) is an active-site residue. Residue T177 participates in (2E)-4-hydroxy-3-methylbut-2-enyl diphosphate binding. C207 contributes to the [4Fe-4S] cluster binding site. S235, S236, N237, and S280 together coordinate (2E)-4-hydroxy-3-methylbut-2-enyl diphosphate. 4 residues coordinate dimethylallyl diphosphate: S235, S236, N237, and S280. Residues S235, S236, N237, and S280 each coordinate isopentenyl diphosphate.

Belongs to the IspH family. The cofactor is [4Fe-4S] cluster.

The catalysed reaction is isopentenyl diphosphate + 2 oxidized [2Fe-2S]-[ferredoxin] + H2O = (2E)-4-hydroxy-3-methylbut-2-enyl diphosphate + 2 reduced [2Fe-2S]-[ferredoxin] + 2 H(+). The enzyme catalyses dimethylallyl diphosphate + 2 oxidized [2Fe-2S]-[ferredoxin] + H2O = (2E)-4-hydroxy-3-methylbut-2-enyl diphosphate + 2 reduced [2Fe-2S]-[ferredoxin] + 2 H(+). It functions in the pathway isoprenoid biosynthesis; dimethylallyl diphosphate biosynthesis; dimethylallyl diphosphate from (2E)-4-hydroxy-3-methylbutenyl diphosphate: step 1/1. The protein operates within isoprenoid biosynthesis; isopentenyl diphosphate biosynthesis via DXP pathway; isopentenyl diphosphate from 1-deoxy-D-xylulose 5-phosphate: step 6/6. In terms of biological role, catalyzes the conversion of 1-hydroxy-2-methyl-2-(E)-butenyl 4-diphosphate (HMBPP) into a mixture of isopentenyl diphosphate (IPP) and dimethylallyl diphosphate (DMAPP). Acts in the terminal step of the DOXP/MEP pathway for isoprenoid precursor biosynthesis. The polypeptide is 4-hydroxy-3-methylbut-2-enyl diphosphate reductase (Rhizobium rhizogenes (strain K84 / ATCC BAA-868) (Agrobacterium radiobacter)).